Reading from the N-terminus, the 431-residue chain is Glucose-1-phosphate adenylyltransferase (431 aa).

Alpha-D-glucose 1-phosphate contacts are provided by residues Y108, G174, 189–190 (EK), and S207.

The protein belongs to the bacterial/plant glucose-1-phosphate adenylyltransferase family. Homotetramer.

The catalysed reaction is alpha-D-glucose 1-phosphate + ATP + H(+) = ADP-alpha-D-glucose + diphosphate. Its pathway is glycan biosynthesis; glycogen biosynthesis. Its function is as follows. Involved in the biosynthesis of ADP-glucose, a building block required for the elongation reactions to produce glycogen. Catalyzes the reaction between ATP and alpha-D-glucose 1-phosphate (G1P) to produce pyrophosphate and ADP-Glc. The chain is Glucose-1-phosphate adenylyltransferase from Actinobacillus succinogenes (strain ATCC 55618 / DSM 22257 / CCUG 43843 / 130Z).